Here is a 570-residue protein sequence, read N- to C-terminus: Sulfite reductase [NADPH] hemoprotein beta-component (570 aa).

4 residues coordinate [4Fe-4S] cluster: C434, C440, C479, and C483. Residue C483 coordinates siroheme.

This sequence belongs to the nitrite and sulfite reductase 4Fe-4S domain family. In terms of assembly, alpha(8)-beta(8). The alpha component is a flavoprotein, the beta component is a hemoprotein. Siroheme is required as a cofactor. The cofactor is [4Fe-4S] cluster.

It carries out the reaction hydrogen sulfide + 3 NADP(+) + 3 H2O = sulfite + 3 NADPH + 4 H(+). Its pathway is sulfur metabolism; hydrogen sulfide biosynthesis; hydrogen sulfide from sulfite (NADPH route): step 1/1. Functionally, component of the sulfite reductase complex that catalyzes the 6-electron reduction of sulfite to sulfide. This is one of several activities required for the biosynthesis of L-cysteine from sulfate. The chain is Sulfite reductase [NADPH] hemoprotein beta-component from Escherichia coli O9:H4 (strain HS).